We begin with the raw amino-acid sequence, 136 residues long: Large-conductance mechanosensitive channel (136 aa).

The next 4 helical transmembrane spans lie at A9 to F29, I32 to V52, F54 to A74, and I79 to I99.

It belongs to the MscL family. In terms of assembly, homopentamer.

Its subcellular location is the cell inner membrane. Functionally, channel that opens in response to stretch forces in the membrane lipid bilayer. May participate in the regulation of osmotic pressure changes within the cell. The protein is Large-conductance mechanosensitive channel of Vibrio cholerae serotype O1 (strain ATCC 39541 / Classical Ogawa 395 / O395).